A 353-amino-acid chain; its full sequence is FNMESDSFEDFWKGEDLSNYSYSSALPPFLLDASPCEPESLEINKYFVVIIYALVFLLSLLGNSLVILVILYSRVGRSVTDVYLLNLALADLLFALTLPIWAASKVNGWIFGTFLCKVVSLLKEVNFYSGILLLACISVDRYLAIVHATRTLTQKRYLVKFICLSIWGLSLLLALPVLLFRRTIYPSNVSPVCYEDMGNNTANWRMLLRILPQSFGFIVPLLIMLFCYGFTLRTLFKAHMGQKHRAMRVIFAVVLIFLLCWLPYNLVLLADTLMRTQVIQETCERRNHINQALDATEILGILHSCLNPLIYAFIGQKFCHGLLKILAIHGLISKDSLPKDSRPSFVGSSSGHT.

The Extracellular segment spans residues F1–K45. N19 is a glycosylation site (N-linked (GlcNAc...) asparagine). The chain crosses the membrane as a helical span at residues Y46 to Y72. Residues S73–D81 lie on the Cytoplasmic side of the membrane. Residues V82–A102 traverse the membrane as a helical segment. Topologically, residues A103–K117 are extracellular. A disulfide bond links C116 and C193. A helical membrane pass occupies residues V118–V139. Residues D140–K160 lie on the Cytoplasmic side of the membrane. Residues F161 to F180 form a helical membrane-spanning segment. Topologically, residues R181 to R205 are extracellular. Residues M206–Y228 form a helical membrane-spanning segment. At G229–R248 the chain is on the cytoplasmic side. Residues V249–A270 form a helical membrane-spanning segment. The Extracellular segment spans residues D271–Q291. A helical membrane pass occupies residues A292–A312. The Cytoplasmic portion of the chain corresponds to F313–T353.

The protein belongs to the G-protein coupled receptor 1 family. As to quaternary structure, interacts with IL8. Interacts with GNAI2. In terms of processing, phosphorylated upon ligand binding; which is required for desensitization.

It is found in the cell membrane. In terms of biological role, receptor for interleukin-8 which is a powerful neutrophil chemotactic factor. Binding of IL-8 to the receptor causes activation of neutrophils. This response is mediated via a G-protein that activates a phosphatidylinositol-calcium second messenger system. Binds to IL-8 with high affinity. Also binds with high affinity to CXCL3, GRO/MGSA and NAP-2. In Gorilla gorilla gorilla (Western lowland gorilla), this protein is C-X-C chemokine receptor type 2 (CXCR2).